Consider the following 259-residue polypeptide: Pycsar effector protein RsmPycTIR (259 aa).

1-120 (MVGGDEVIAN…RRVHEDFSGR (120 aa)) is an a nucleoside 3',5'-cyclic phosphate binding site. The tract at residues 126–229 (LATGISRRTS…AEFQYQISSS (104 aa)) is TIR-like. 3 consecutive transmembrane segments (helical) span residues 136-156 (GWNW…AIWY), 169-189 (VLLP…ADPV), and 234-254 (QATA…LFWI).

Its subcellular location is the cell inner membrane. The enzyme catalyses NAD(+) + H2O = ADP-D-ribose + nicotinamide + H(+). Functionally, pycsar (pyrimidine cyclase system for antiphage resistance) provides immunity against bacteriophage. The pyrimidine cyclase (PycC) synthesizes cyclic nucleotides in response to infection; these serve as specific second messenger signals. The signals activate the adjacent effector, leading to bacterial cell death and abortive phage infection. A clade B Pycsar system. The effector gene of a two-gene Pycsar system. Expression of this and adjacent uridylate cyclase RsmPycC (AC A0A1V0HUX5) probably confers resistance to bacteriophage. The genes are probably only expressed in response to bacteriophage infection. Probably only responds to cUMP (produced by its cognate NTP cyclase), it may act by degrading NAD(+) and/or by impairing membrane integrity. This is Pycsar effector protein RsmPycTIR from Rhodovulum sp. (strain MB263).